Consider the following 610-residue polypeptide: UvrABC system protein C (610 aa).

Residues 16–94 (SQPGVYRMYD…IKLYQPRYNV (79 aa)) form the GIY-YIG domain. Residues 204–239 (DQVLTQLIARMEKASQDLAFEEAARIRDQIQAVRRV) enclose the UVR domain.

Belongs to the UvrC family. Interacts with UvrB in an incision complex.

It is found in the cytoplasm. Functionally, the UvrABC repair system catalyzes the recognition and processing of DNA lesions. UvrC both incises the 5' and 3' sides of the lesion. The N-terminal half is responsible for the 3' incision and the C-terminal half is responsible for the 5' incision. In Salmonella paratyphi B (strain ATCC BAA-1250 / SPB7), this protein is UvrABC system protein C.